The primary structure comprises 432 residues: Adenylosuccinate synthetase (432 aa).

GTP contacts are provided by residues 13 to 19 (GDEGKGK) and 41 to 43 (GHT). D14 acts as the Proton acceptor in catalysis. Mg(2+)-binding residues include D14 and G41. IMP-binding positions include 14 to 17 (DEGK), 39 to 42 (NAGH), T130, R144, Q225, T240, and R304. H42 acts as the Proton donor in catalysis. Residue 300–306 (AVTGRPR) coordinates substrate. Residues R306, 332-334 (KLD), and 415-417 (STG) each bind GTP.

Belongs to the adenylosuccinate synthetase family. As to quaternary structure, homodimer. Mg(2+) serves as cofactor.

The protein localises to the cytoplasm. It carries out the reaction IMP + L-aspartate + GTP = N(6)-(1,2-dicarboxyethyl)-AMP + GDP + phosphate + 2 H(+). The protein operates within purine metabolism; AMP biosynthesis via de novo pathway; AMP from IMP: step 1/2. In terms of biological role, plays an important role in the de novo pathway of purine nucleotide biosynthesis. Catalyzes the first committed step in the biosynthesis of AMP from IMP. The sequence is that of Adenylosuccinate synthetase from Mannheimia succiniciproducens (strain KCTC 0769BP / MBEL55E).